The chain runs to 228 residues: Small ribosomal subunit protein uS7m (228 aa).

Residues 1 to 33 constitute a mitochondrion transit peptide; the sequence is MAASVRHLLKPWTPSLCLMRWSRYNPYYLDPEP.

The protein belongs to the universal ribosomal protein uS7 family. In terms of assembly, component of the mitochondrial ribosome small subunit (28S) which comprises a 12S rRNA and about 30 distinct proteins.

The protein localises to the mitochondrion. This Danio rerio (Zebrafish) protein is Small ribosomal subunit protein uS7m (mrps7).